The following is a 282-amino-acid chain: Undecaprenyl-diphosphatase (282 aa).

7 consecutive transmembrane segments (helical) span residues 40–60, 85–105, 115–135, 153–173, 193–213, 230–250, and 258–278; these read GAAF…MYFW, ARMG…GLLF, SLYW…LAEW, IGWK…IPGS, AARF…IFQL, LAAA…FLLS, and TIFI…LSTG.

The protein belongs to the UppP family.

It is found in the cell inner membrane. The catalysed reaction is di-trans,octa-cis-undecaprenyl diphosphate + H2O = di-trans,octa-cis-undecaprenyl phosphate + phosphate + H(+). Its function is as follows. Catalyzes the dephosphorylation of undecaprenyl diphosphate (UPP). Confers resistance to bacitracin. The protein is Undecaprenyl-diphosphatase of Chlorobium phaeovibrioides (strain DSM 265 / 1930) (Prosthecochloris vibrioformis (strain DSM 265)).